The chain runs to 227 residues: Ubiquitin domain-containing protein 1 (227 aa).

A disordered region spans residues 1–36; it reads MGNCVGRQRRERPTAPGHPRKRAGRNEPLKKERLKW. Positions 24-36 are enriched in basic and acidic residues; sequence GRNEPLKKERLKW. The Ubiquitin-like domain occupies 149–224; it reads FPLKVRLSTG…IQVIINQPPP (76 aa).

Interacts with UBTD1.

May be involved in the regulation of cellular senescence through a positive feedback loop with TP53. Is a TP53 downstream target gene that increases the stability of TP53 protein by promoting the ubiquitination and degradation of MDM2. The chain is Ubiquitin domain-containing protein 1 (UBTD1) from Bos taurus (Bovine).